The sequence spans 295 residues: UDP-N-acetylenolpyruvoylglucosamine reductase (295 aa).

In terms of domain architecture, FAD-binding PCMH-type spans 23 to 188 (KVGGPADFLA…ISAKFALKPG (166 aa)). Arg-167 is an active-site residue. The active-site Proton donor is Ser-217. Glu-287 is a catalytic residue.

It belongs to the MurB family. It depends on FAD as a cofactor.

It localises to the cytoplasm. The enzyme catalyses UDP-N-acetyl-alpha-D-muramate + NADP(+) = UDP-N-acetyl-3-O-(1-carboxyvinyl)-alpha-D-glucosamine + NADPH + H(+). It functions in the pathway cell wall biogenesis; peptidoglycan biosynthesis. In terms of biological role, cell wall formation. The chain is UDP-N-acetylenolpyruvoylglucosamine reductase from Streptococcus pyogenes serotype M49 (strain NZ131).